Here is a 252-residue protein sequence, read N- to C-terminus: Probable transcriptional regulatory protein CE1776 (252 aa).

Positions 1-22 are disordered; it reads MAGHSKWATTKHKKAANDAKRG.

Belongs to the TACO1 family.

Its subcellular location is the cytoplasm. This Corynebacterium efficiens (strain DSM 44549 / YS-314 / AJ 12310 / JCM 11189 / NBRC 100395) protein is Probable transcriptional regulatory protein CE1776.